The following is a 589-amino-acid chain: Sulfite reductase [NADPH] hemoprotein beta-component (589 aa).

Positions 443, 449, 488, and 492 each coordinate [4Fe-4S] cluster. C492 provides a ligand contact to siroheme.

Belongs to the nitrite and sulfite reductase 4Fe-4S domain family. In terms of assembly, alpha(8)-beta(8). The alpha component is a flavoprotein, the beta component is a hemoprotein. Requires siroheme as cofactor. It depends on [4Fe-4S] cluster as a cofactor.

The catalysed reaction is hydrogen sulfide + 3 NADP(+) + 3 H2O = sulfite + 3 NADPH + 4 H(+). Its pathway is sulfur metabolism; hydrogen sulfide biosynthesis; hydrogen sulfide from sulfite (NADPH route): step 1/1. Component of the sulfite reductase complex that catalyzes the 6-electron reduction of sulfite to sulfide. This is one of several activities required for the biosynthesis of L-cysteine from sulfate. The sequence is that of Sulfite reductase [NADPH] hemoprotein beta-component from Neisseria meningitidis serogroup C / serotype 2a (strain ATCC 700532 / DSM 15464 / FAM18).